We begin with the raw amino-acid sequence, 618 residues long: Probable Xaa-Pro aminopeptidase P (618 aa).

Residues D415, D426, E524, and E538 each coordinate Mn(2+).

The protein belongs to the peptidase M24B family. Requires Mn(2+) as cofactor.

It carries out the reaction Release of any N-terminal amino acid, including proline, that is linked to proline, even from a dipeptide or tripeptide.. Catalyzes the removal of a penultimate prolyl residue from the N-termini of peptides. In Pyricularia oryzae (strain 70-15 / ATCC MYA-4617 / FGSC 8958) (Rice blast fungus), this protein is Probable Xaa-Pro aminopeptidase P (AMPP).